The primary structure comprises 372 residues: MTSLLLNAKCLVVKVGSSLVTNNGAGLDKGAIAAWADQIARLVKSGRQVVLVSSGAVAEGMQRLGWKKRPVAINELQAAAAVGQMGLVQMYESCFASHGLHTAQILLTHADLADRKRYLNARTTLRTLLDLGVIPIINENDTVVTDEIRFGDNDTLGSLVANLIEADALVILTDQPGLYSADPRKHPDAQFIQYETAGNPALEKMAGGAGTLIGSGGMLTKILAAKRAARSGAHTVIASGREPDILVRLAQGEVVGTHLKAGQVKTLARKQWLADQLRVAGKVVVDEGAAKALREGGRSLLPIGVMAVEGSFERGEVVSCVNTAGEEIARGLVNYSALETARILRQPSHEIEHILGYIDGPELIHRDNLILV.

Lys14 is a binding site for ATP. Substrate contacts are provided by Ser54, Asp141, and Asn153. Residues 173 to 174 and 215 to 221 contribute to the ATP site; these read TD and SGGMLTK. Positions 280 to 358 constitute a PUA domain; that stretch reads AGKVVVDEGA…HEIEHILGYI (79 aa).

Belongs to the glutamate 5-kinase family.

It localises to the cytoplasm. The enzyme catalyses L-glutamate + ATP = L-glutamyl 5-phosphate + ADP. It participates in amino-acid biosynthesis; L-proline biosynthesis; L-glutamate 5-semialdehyde from L-glutamate: step 1/2. In terms of biological role, catalyzes the transfer of a phosphate group to glutamate to form L-glutamate 5-phosphate. In Methylobacillus flagellatus (strain ATCC 51484 / DSM 6875 / VKM B-1610 / KT), this protein is Glutamate 5-kinase.